Consider the following 401-residue polypeptide: tRNA-specific 2-thiouridylase MnmA (401 aa).

ATP-binding positions include 13 to 20 (GLSGGVDS) and Met39. Positions 99-101 (NPD) are interaction with target base in tRNA. The active-site Nucleophile is Cys104. An intrachain disulfide couples Cys104 to Cys202. ATP is bound at residue Gly128. An interaction with tRNA region spans residues 152–154 (KDQ). Cys202 acts as the Cysteine persulfide intermediate in catalysis. An interaction with tRNA region spans residues 329–330 (RY).

The protein belongs to the MnmA/TRMU family.

The protein resides in the cytoplasm. The catalysed reaction is S-sulfanyl-L-cysteinyl-[protein] + uridine(34) in tRNA + AH2 + ATP = 2-thiouridine(34) in tRNA + L-cysteinyl-[protein] + A + AMP + diphosphate + H(+). Its function is as follows. Catalyzes the 2-thiolation of uridine at the wobble position (U34) of tRNA, leading to the formation of s(2)U34. The protein is tRNA-specific 2-thiouridylase MnmA of Polaromonas sp. (strain JS666 / ATCC BAA-500).